Reading from the N-terminus, the 345-residue chain is Glycerol-3-phosphate dehydrogenase [NAD(P)+] (345 aa).

NADPH contacts are provided by S11, W12, R32, R33, and K105. 3 residues coordinate sn-glycerol 3-phosphate: K105, G136, and S138. A140 contacts NADPH. The sn-glycerol 3-phosphate site is built by K191, D244, S254, R255, and N256. The Proton acceptor role is filled by K191. An NADPH-binding site is contributed by R255. NADPH is bound by residues V279 and E281.

Belongs to the NAD-dependent glycerol-3-phosphate dehydrogenase family.

It localises to the cytoplasm. The enzyme catalyses sn-glycerol 3-phosphate + NAD(+) = dihydroxyacetone phosphate + NADH + H(+). It carries out the reaction sn-glycerol 3-phosphate + NADP(+) = dihydroxyacetone phosphate + NADPH + H(+). It participates in membrane lipid metabolism; glycerophospholipid metabolism. Its function is as follows. Catalyzes the reduction of the glycolytic intermediate dihydroxyacetone phosphate (DHAP) to sn-glycerol 3-phosphate (G3P), the key precursor for phospholipid synthesis. The polypeptide is Glycerol-3-phosphate dehydrogenase [NAD(P)+] (Halalkalibacterium halodurans (strain ATCC BAA-125 / DSM 18197 / FERM 7344 / JCM 9153 / C-125) (Bacillus halodurans)).